The sequence spans 141 residues: Nucleoside diphosphate kinase (141 aa).

Residues lysine 11, phenylalanine 59, arginine 87, threonine 93, arginine 104, and asparagine 114 each coordinate ATP. Histidine 117 (pros-phosphohistidine intermediate) is an active-site residue.

It belongs to the NDK family. As to quaternary structure, homotetramer. The cofactor is Mg(2+).

The protein resides in the cytoplasm. It carries out the reaction a 2'-deoxyribonucleoside 5'-diphosphate + ATP = a 2'-deoxyribonucleoside 5'-triphosphate + ADP. The enzyme catalyses a ribonucleoside 5'-diphosphate + ATP = a ribonucleoside 5'-triphosphate + ADP. Its function is as follows. Major role in the synthesis of nucleoside triphosphates other than ATP. The ATP gamma phosphate is transferred to the NDP beta phosphate via a ping-pong mechanism, using a phosphorylated active-site intermediate. The polypeptide is Nucleoside diphosphate kinase (Xylella fastidiosa (strain 9a5c)).